Consider the following 436-residue polypeptide: NAD(P)-dependent benzaldehyde dehydrogenase (436 aa).

Residues 117–119 (GPF), 143–147 (KPSET), 175–178 (RDEN), 193–194 (GS), 215–216 (EL), C249, and 337–339 (ELF) each bind NADP(+). Active-site residues include E215 and C249.

The protein belongs to the aldehyde dehydrogenase family.

The catalysed reaction is benzaldehyde + NAD(+) + H2O = benzoate + NADH + 2 H(+). It catalyses the reaction benzaldehyde + NADP(+) + H2O = benzoate + NADPH + 2 H(+). It participates in aromatic compound metabolism; (R)-mandelate degradation; benzoate from (R)-mandelate: step 4/4. NAD or NADP-dependent benzaldehyde dehydrogenase that catalyzes the conversion of benzaldehyde into benzoate in the (R)-mandelate degradation pathway. The polypeptide is NAD(P)-dependent benzaldehyde dehydrogenase (mdlD) (Pseudomonas putida (Arthrobacter siderocapsulatus)).